Reading from the N-terminus, the 212-residue chain is Large ribosomal subunit protein uL3 (212 aa).

The residue at position 153 (Q153) is an N5-methylglutamine.

The protein belongs to the universal ribosomal protein uL3 family. In terms of assembly, part of the 50S ribosomal subunit. Forms a cluster with proteins L14 and L19. Post-translationally, methylated by PrmB.

One of the primary rRNA binding proteins, it binds directly near the 3'-end of the 23S rRNA, where it nucleates assembly of the 50S subunit. The chain is Large ribosomal subunit protein uL3 from Shewanella sediminis (strain HAW-EB3).